A 1388-amino-acid polypeptide reads, in one-letter code: Rho-associated protein kinase 2 (1388 aa).

The disordered stretch occupies residues 1 to 24 (MSRPPPTGKMPGAPEAVSGDGAGA). The Protein kinase domain maps to 92 to 354 (YDVVKVIGRG…VEEIKQHPFF (263 aa)). Residues 98–106 (IGRGAFGEV) and lysine 121 each bind ATP. Residue aspartate 214 is the Proton acceptor of the active site. The 69-residue stretch at 357 to 425 (DQWNWDNIRE…YRENLLLSDS (69 aa)) folds into the AGC-kinase C-terminal domain. The tract at residues 363–784 (NIRETAAPVV…INELLKQKDV (422 aa)) is interaction with PPP1R12A. Residues 373–420 (PELSSDIDSSNFDDIEDDKGDVETFPIPKAFVGNQLPFIGFTYYRENL) form an interaction with NPM1 region. Residue threonine 414 is modified to Phosphothreonine; by ROCK2. Coiled-coil stretches lie at residues 439 to 1025 (NEES…KQLL) and 1053 to 1131 (DTDV…IGLD). One can recognise an REM-1 domain in the interval 497-573 (TLRQLEREKA…LDETNALLRT (77 aa)). Over residues 512 to 530 (NAEYQRKADHEADKKRNLE) the composition is skewed to basic and acidic residues. Residues 512-532 (NAEYQRKADHEADKKRNLEND) are disordered. Tyrosine 722 carries the phosphotyrosine; by SRC modification. The RhoBD domain occupies 979–1047 (TSDVANLANE…LAEIMNRKEP (69 aa)). The segment at 979-1047 (TSDVANLANE…LAEIMNRKEP (69 aa)) is RHOA binding. At serine 1137 the chain carries Phosphoserine. The PH domain occupies 1150–1349 (ESRLEGWLSL…WVSRLVKKIP (200 aa)). Threonine 1212 is modified (phosphothreonine). A Phorbol-ester/DAG-type zinc finger spans residues 1260-1315 (GHEFIPTLYHFPTNCEACMKPLWHMFKPPPALECRRCHIKCHKDHMDKKEEIIAPC). Residues 1345-1388 (VKKIPKKPPAPDPFARSSPRTSMKIQQNQSIRRPSRQLAPNKPS) are disordered. Serine 1362 and serine 1374 each carry phosphoserine. Positions 1362 to 1376 (SPRTSMKIQQNQSIR) are enriched in polar residues.

This sequence belongs to the protein kinase superfamily. AGC Ser/Thr protein kinase family. Homodimer. Interacts with IRS1. Interacts with RAF1. Interacts with RHOA (activated by GTP). Interacts with RHOB and RHOC. Interacts with PPP1R12A. Interacts with EP300. Interacts with CHORDC1. Interacts with BRCA2. Interacts with NPM1; this interaction enhances ROCK2 activity. Interacts with SORL1. Interacts with PJVK. The cofactor is Mg(2+). In terms of processing, autophosphorylated. Phosphorylation at Tyr-722 reduces its binding to RHOA and is crucial for focal adhesion dynamics. Dephosphorylation by PTPN11 stimulates its RHOA binding activity. Cleaved by granzyme B during apoptosis. This leads to constitutive activation of the kinase and membrane blebbing. In terms of tissue distribution, highly expressed in whole brain and in cerebellum, and at lower levels in heart and lung. Detected at low levels in skeletal muscle, spleen, liver, kidney and pancreas.

It localises to the cytoplasm. Its subcellular location is the cell membrane. The protein localises to the nucleus. The protein resides in the cytoskeleton. It is found in the microtubule organizing center. It localises to the centrosome. The enzyme catalyses L-seryl-[protein] + ATP = O-phospho-L-seryl-[protein] + ADP + H(+). It carries out the reaction L-threonyl-[protein] + ATP = O-phospho-L-threonyl-[protein] + ADP + H(+). With respect to regulation, activated by RHOA binding. Inhibited by Y-27632. Functionally, protein kinase which is a key regulator of actin cytoskeleton and cell polarity. Involved in regulation of smooth muscle contraction, actin cytoskeleton organization, stress fiber and focal adhesion formation, neurite retraction, cell adhesion and motility via phosphorylation of ADD1, BRCA2, CNN1, EZR, DPYSL2, EP300, MSN, MYL9/MLC2, NPM1, RDX, PPP1R12A and VIM. Phosphorylates SORL1 and IRF4. Acts as a negative regulator of VEGF-induced angiogenic endothelial cell activation. Positively regulates the activation of p42/MAPK1-p44/MAPK3 and of p90RSK/RPS6KA1 during myogenic differentiation. Plays an important role in the timely initiation of centrosome duplication. Inhibits keratinocyte terminal differentiation. May regulate closure of the eyelids and ventral body wall through organization of actomyosin bundles. Plays a critical role in the regulation of spine and synaptic properties in the hippocampus. Plays an important role in generating the circadian rhythm of the aortic myofilament Ca(2+) sensitivity and vascular contractility by modulating the myosin light chain phosphorylation. The protein is Rho-associated protein kinase 2 (ROCK2) of Bos taurus (Bovine).